The primary structure comprises 570 residues: Cytoplasmic polyadenylation element-binding protein 2 (570 aa).

Residues 434-516 (LVAFIGGVPR…KRVEIKPYFF (83 aa)) enclose the RRM domain.

As to expression, expressed specifically in the spermatogenic germ line.

In terms of biological role, cytoplasmic polyadenylation element binding protein that binds to and regulates the translation of specific mRNAs. Not required for oogenesis. This Caenorhabditis elegans protein is Cytoplasmic polyadenylation element-binding protein 2 (cpb-2).